We begin with the raw amino-acid sequence, 2051 residues long: Fatty acid synthase subunit beta (2051 aa).

Met-1 is modified (N-acetylmethionine). The interval Met-1–Leu-468 is acetyltransferase. Ser-274 serves as the catalytic For acetyltransferase activity. The segment at Val-480–Phe-868 is enoyl reductase. At Thr-733 the chain carries Phosphothreonine. The residue at position 1121 (Ser-1121) is a Phosphoserine. A dehydratase region spans residues Gly-1144–Ile-1626. A Glycyl lysine isopeptide (Lys-Gly) (interchain with G-Cter in ubiquitin) cross-link involves residue Lys-1364. The region spanning Asn-1523–Val-1648 is the MaoC-like domain. The malonyl/palmitoyl transferase stretch occupies residues Gln-1627 to Asp-1845. The active-site For malonyltransferase activity is Ser-1808.

It belongs to the fungal fatty acid synthetase subunit beta family. [Alpha(6)beta(6)] hexamers of two multifunctional subunits (alpha and beta).

It carries out the reaction acetyl-CoA + n malonyl-CoA + 2n NADPH + 4n H(+) = a long-chain-acyl-CoA + n CoA + n CO2 + 2n NADP(+).. It catalyses the reaction holo-[ACP] + acetyl-CoA = acetyl-[ACP] + CoA. The catalysed reaction is holo-[ACP] + malonyl-CoA = malonyl-[ACP] + CoA. The enzyme catalyses a (3R)-hydroxyacyl-[ACP] = a (2E)-enoyl-[ACP] + H2O. It carries out the reaction a 2,3-saturated acyl-[ACP] + NAD(+) = a (2E)-enoyl-[ACP] + NADH + H(+). It catalyses the reaction (9Z)-octadecenoyl-[ACP] + H2O = (9Z)-octadecenoate + holo-[ACP] + H(+). Fatty acid synthetase catalyzes the formation of long-chain fatty acids from acetyl-CoA, malonyl-CoA and NADPH. The beta subunit contains domains for: [acyl-carrier-protein] acetyltransferase and malonyltransferase, S-acyl fatty acid synthase thioesterase, enoyl-[acyl-carrier-protein] reductase, and 3-hydroxypalmitoyl-[acyl-carrier-protein] dehydratase. The sequence is that of Fatty acid synthase subunit beta (FAS1) from Saccharomyces cerevisiae (strain ATCC 204508 / S288c) (Baker's yeast).